The following is a 251-amino-acid chain: Flap endonuclease Xni (251 aa).

Residue aspartate 104 coordinates Mg(2+). One can recognise a 5'-3' exonuclease domain in the interval 160 to 248 (VSPQQLSDYW…ALTGNLQQLR (89 aa)). The K(+) site is built by leucine 171, alanine 172, proline 180, valine 182, and isoleucine 185. Residues 184–189 (GIGPKT) form an interaction with DNA region.

It belongs to the Xni family. Requires Mg(2+) as cofactor. It depends on K(+) as a cofactor.

Its function is as follows. Has flap endonuclease activity. During DNA replication, flap endonucleases cleave the 5'-overhanging flap structure that is generated by displacement synthesis when DNA polymerase encounters the 5'-end of a downstream Okazaki fragment. The protein is Flap endonuclease Xni of Serratia proteamaculans (strain 568).